Reading from the N-terminus, the 147-residue chain is 3-hydroxyacyl-[acyl-carrier-protein] dehydratase FabZ (147 aa).

Histidine 49 is a catalytic residue.

The protein belongs to the thioester dehydratase family. FabZ subfamily.

It localises to the cytoplasm. The enzyme catalyses a (3R)-hydroxyacyl-[ACP] = a (2E)-enoyl-[ACP] + H2O. Functionally, involved in unsaturated fatty acids biosynthesis. Catalyzes the dehydration of short chain beta-hydroxyacyl-ACPs and long chain saturated and unsaturated beta-hydroxyacyl-ACPs. The chain is 3-hydroxyacyl-[acyl-carrier-protein] dehydratase FabZ from Syntrophotalea carbinolica (strain DSM 2380 / NBRC 103641 / GraBd1) (Pelobacter carbinolicus).